A 235-amino-acid chain; its full sequence is N,O-diacetylmuramidase (235 aa).

Positions 1-17 are cleaved as a signal peptide; the sequence is MKLSLLTVAAAAGAAVA. Positions 29-235 constitute a Ch-type lysozyme domain; the sequence is SVQGFDISGY…DQLQRFAKGG (207 aa). Residues Asp34, Asp122, and Glu124 contribute to the active site. Cysteines 132 and 171 form a disulfide.

This sequence belongs to the glycosyl hydrolase 25 family.

Its subcellular location is the secreted. The catalysed reaction is Hydrolysis of (1-&gt;4)-beta-linkages between N-acetylmuramic acid and N-acetyl-D-glucosamine residues in a peptidoglycan and between N-acetyl-D-glucosamine residues in chitodextrins.. Its function is as follows. This enzyme has both lysozyme (acetylmuramidase) and diacetylmuramidase activities. In Arthroderma benhamiae (strain ATCC MYA-4681 / CBS 112371) (Trichophyton mentagrophytes), this protein is N,O-diacetylmuramidase.